An 88-amino-acid chain; its full sequence is Kunitz-type U15-theraphotoxin-Hhn1p (88 aa).

An N-terminal signal peptide occupies residues 1 to 27; sequence MGIARILSAVLFLSVLFVVTFPTLLSA. Residues 28–33 constitute a propeptide that is removed on maturation; the sequence is DHHDGR. The 49-residue stretch at 37-85 folds into the BPTI/Kunitz inhibitor domain; the sequence is CRLPSDRGRCKASFERWYFNGTTCTKFVYGGYGGNDNRFPTEKACMKRC. Disulfide bonds link cysteine 37–cysteine 85 and cysteine 60–cysteine 81.

The protein belongs to the venom Kunitz-type family. 01 (intermediate) subfamily. In terms of tissue distribution, expressed by the venom gland.

Its subcellular location is the secreted. Serine protease inhibitor that inhibits trypsin at a molar ratio of 1:1. The chain is Kunitz-type U15-theraphotoxin-Hhn1p from Cyriopagopus hainanus (Chinese bird spider).